Reading from the N-terminus, the 426-residue chain is Serine hydroxymethyltransferase 1 (426 aa).

Residues L121 and 125 to 127 (GHL) contribute to the (6S)-5,6,7,8-tetrahydrofolate site. Position 230 is an N6-(pyridoxal phosphate)lysine (K230). 355–357 (SPF) lines the (6S)-5,6,7,8-tetrahydrofolate pocket.

The protein belongs to the SHMT family. As to quaternary structure, homodimer. The cofactor is pyridoxal 5'-phosphate.

It localises to the cytoplasm. It catalyses the reaction (6R)-5,10-methylene-5,6,7,8-tetrahydrofolate + glycine + H2O = (6S)-5,6,7,8-tetrahydrofolate + L-serine. The protein operates within one-carbon metabolism; tetrahydrofolate interconversion. It functions in the pathway amino-acid biosynthesis; glycine biosynthesis; glycine from L-serine: step 1/1. Functionally, catalyzes the reversible interconversion of serine and glycine with tetrahydrofolate (THF) serving as the one-carbon carrier. This reaction serves as the major source of one-carbon groups required for the biosynthesis of purines, thymidylate, methionine, and other important biomolecules. Also exhibits THF-independent aldolase activity toward beta-hydroxyamino acids, producing glycine and aldehydes, via a retro-aldol mechanism. This is Serine hydroxymethyltransferase 1 from Hahella chejuensis (strain KCTC 2396).